A 453-amino-acid polypeptide reads, in one-letter code: Bifunctional protein GlmU (453 aa).

The interval 1-227 is pyrophosphorylase; sequence MTQDIVILAA…EAEVAGVNDR (227 aa). Residues 8–11, lysine 22, glutamine 73, 78–79, 100–102, glycine 137, glutamate 152, asparagine 167, and asparagine 225 each bind UDP-N-acetyl-alpha-D-glucosamine; these read LAAG, GT, and YGD. A Mg(2+)-binding site is contributed by aspartate 102. Residue asparagine 225 participates in Mg(2+) binding. The segment at 228–248 is linker; it reads VQLAALERELQNQQAVSLMQN. Residues 249 to 453 form an N-acetyltransferase region; that stretch reads GATLLDPSRI…KDNWPRPIKK (205 aa). 2 residues coordinate UDP-N-acetyl-alpha-D-glucosamine: arginine 331 and lysine 349. The Proton acceptor role is filled by histidine 361. Residues tyrosine 364 and asparagine 375 each contribute to the UDP-N-acetyl-alpha-D-glucosamine site. Residues alanine 378, 384–385, serine 403, alanine 421, and arginine 438 contribute to the acetyl-CoA site; that span reads NY.

It in the N-terminal section; belongs to the N-acetylglucosamine-1-phosphate uridyltransferase family. This sequence in the C-terminal section; belongs to the transferase hexapeptide repeat family. As to quaternary structure, homotrimer. Requires Mg(2+) as cofactor.

The protein resides in the cytoplasm. It catalyses the reaction alpha-D-glucosamine 1-phosphate + acetyl-CoA = N-acetyl-alpha-D-glucosamine 1-phosphate + CoA + H(+). The enzyme catalyses N-acetyl-alpha-D-glucosamine 1-phosphate + UTP + H(+) = UDP-N-acetyl-alpha-D-glucosamine + diphosphate. It functions in the pathway nucleotide-sugar biosynthesis; UDP-N-acetyl-alpha-D-glucosamine biosynthesis; N-acetyl-alpha-D-glucosamine 1-phosphate from alpha-D-glucosamine 6-phosphate (route II): step 2/2. Its pathway is nucleotide-sugar biosynthesis; UDP-N-acetyl-alpha-D-glucosamine biosynthesis; UDP-N-acetyl-alpha-D-glucosamine from N-acetyl-alpha-D-glucosamine 1-phosphate: step 1/1. It participates in bacterial outer membrane biogenesis; LPS lipid A biosynthesis. Its function is as follows. Catalyzes the last two sequential reactions in the de novo biosynthetic pathway for UDP-N-acetylglucosamine (UDP-GlcNAc). The C-terminal domain catalyzes the transfer of acetyl group from acetyl coenzyme A to glucosamine-1-phosphate (GlcN-1-P) to produce N-acetylglucosamine-1-phosphate (GlcNAc-1-P), which is converted into UDP-GlcNAc by the transfer of uridine 5-monophosphate (from uridine 5-triphosphate), a reaction catalyzed by the N-terminal domain. This is Bifunctional protein GlmU from Marinomonas sp. (strain MWYL1).